The sequence spans 296 residues: 4-hydroxybenzoate octaprenyltransferase (296 aa).

8 helical membrane-spanning segments follow: residues 28–48 (PIGIYLLLWPTLWAVWIAGKG), 52–72 (LKTVFIFVVGVFLMRAAGCVI), 102–122 (ALALFAVLVGLSFVLVLFTNA), 146–166 (YYPQVVLGAAFSWGMPMAFTA), 169–189 (GDLPAAAWLLYIANLLWTVGY), 219–239 (VIILTLQGLALGCLMLAGARF), 241–261 (LGACFYIGLLAAAGCFAWEFW), and 275–295 (FLHNHWAGLAIFLGIVADYAV).

Belongs to the UbiA prenyltransferase family. Mg(2+) is required as a cofactor.

It is found in the cell inner membrane. It catalyses the reaction all-trans-octaprenyl diphosphate + 4-hydroxybenzoate = 4-hydroxy-3-(all-trans-octaprenyl)benzoate + diphosphate. It functions in the pathway cofactor biosynthesis; ubiquinone biosynthesis. Functionally, catalyzes the prenylation of para-hydroxybenzoate (PHB) with an all-trans polyprenyl group. Mediates the second step in the final reaction sequence of ubiquinone-8 (UQ-8) biosynthesis, which is the condensation of the polyisoprenoid side chain with PHB, generating the first membrane-bound Q intermediate 3-octaprenyl-4-hydroxybenzoate. The sequence is that of 4-hydroxybenzoate octaprenyltransferase from Pseudomonas savastanoi pv. phaseolicola (strain 1448A / Race 6) (Pseudomonas syringae pv. phaseolicola (strain 1448A / Race 6)).